A 249-amino-acid polypeptide reads, in one-letter code: 2-C-methyl-D-erythritol 4-phosphate cytidylyltransferase (249 aa).

It belongs to the IspD/TarI cytidylyltransferase family. IspD subfamily.

It catalyses the reaction 2-C-methyl-D-erythritol 4-phosphate + CTP + H(+) = 4-CDP-2-C-methyl-D-erythritol + diphosphate. Its pathway is isoprenoid biosynthesis; isopentenyl diphosphate biosynthesis via DXP pathway; isopentenyl diphosphate from 1-deoxy-D-xylulose 5-phosphate: step 2/6. In terms of biological role, catalyzes the formation of 4-diphosphocytidyl-2-C-methyl-D-erythritol from CTP and 2-C-methyl-D-erythritol 4-phosphate (MEP). This is 2-C-methyl-D-erythritol 4-phosphate cytidylyltransferase from Thermobifida fusca (strain YX).